Reading from the N-terminus, the 206-residue chain is Ras-related protein Rab-7b (206 aa).

15–22 (GDSGVGKT) is a GTP binding site. Residues serine 17 and serine 23 each carry the phosphoserine modification. Threonine 34, threonine 40, and threonine 64 each carry phosphothreonine. Residues 34–40 (TQQYRAT) and 63–67 (DTAGQ) contribute to the GTP site. An Effector region motif is present at residues 37-45 (YRATVGADF). Serine 72 is modified (phosphoserine). Residues tyrosine 78 and tyrosine 88 each carry the phosphotyrosine modification. GTP contacts are provided by residues 125–128 (NKLD) and 157–158 (AK). S-geranylgeranyl cysteine attachment occurs at residues cysteine 205 and cysteine 206.

Belongs to the small GTPase superfamily. Rab family. Glycosylated.

The protein localises to the cytoplasm. It is found in the cytoskeleton. The protein is Ras-related protein Rab-7b of Paramecium octaurelia.